Reading from the N-terminus, the 383-residue chain is Protein arginine N-methyltransferase PRMT10 (383 aa).

The tract at residues 1–23 (MRSSQNGGAMGGRAAGTGGGGPS) is disordered. Positions 8-22 (GAMGGRAAGTGGGGP) are enriched in gly residues. The 332-residue stretch at 29-360 (EVDYAQYFCT…KENHRLMEIE (332 aa)) folds into the SAM-dependent MTase PRMT-type domain. S-adenosyl-L-methionine-binding residues include Gln45, Arg54, Gly78, Glu100, and Glu129. Residues Glu143 and Glu152 contribute to the active site. A dimerization arm region spans residues 190–230 (DRKRNDFDGAMADWHNFSDEIKSYYGVDMGVLTKPFAEEQE).

Belongs to the class I-like SAM-binding methyltransferase superfamily. Protein arginine N-methyltransferase family. Ring-like homodimer.

It carries out the reaction L-arginyl-[protein] + 2 S-adenosyl-L-methionine = N(omega),N(omega)-dimethyl-L-arginyl-[protein] + 2 S-adenosyl-L-homocysteine + 2 H(+). Its function is as follows. Methylates (mono and asymmetric dimethylation) the guanidino nitrogens of arginyl residues in some proteins. Essential for regulating flowering time. The sequence is that of Protein arginine N-methyltransferase PRMT10 (PRMT10) from Arabidopsis thaliana (Mouse-ear cress).